The chain runs to 159 residues: Transcription elongation factor GreA (159 aa).

The stretch at 44 to 75 (SENAEYDAAREQQSQTEARIADLESKLSSATI) forms a coiled coil.

The protein belongs to the GreA/GreB family.

Necessary for efficient RNA polymerase transcription elongation past template-encoded arresting sites. The arresting sites in DNA have the property of trapping a certain fraction of elongating RNA polymerases that pass through, resulting in locked ternary complexes. Cleavage of the nascent transcript by cleavage factors such as GreA or GreB allows the resumption of elongation from the new 3'terminus. GreA releases sequences of 2 to 3 nucleotides. This is Transcription elongation factor GreA from Chlorobium phaeovibrioides (strain DSM 265 / 1930) (Prosthecochloris vibrioformis (strain DSM 265)).